The primary structure comprises 397 residues: Argininosuccinate synthase (397 aa).

8–16 is a binding site for ATP; the sequence is AYSGGLDTS. Residues Tyr86 and Ser91 each contribute to the L-citrulline site. ATP is bound at residue Gly116. L-aspartate is bound by residues Thr118, Asn122, and Asp123. An L-citrulline-binding site is contributed by Asn122. L-citrulline-binding residues include Arg126, Ser175, Ser184, Glu260, and Tyr272.

It belongs to the argininosuccinate synthase family. Type 1 subfamily. Homotetramer.

It is found in the cytoplasm. The enzyme catalyses L-citrulline + L-aspartate + ATP = 2-(N(omega)-L-arginino)succinate + AMP + diphosphate + H(+). It functions in the pathway amino-acid biosynthesis; L-arginine biosynthesis; L-arginine from L-ornithine and carbamoyl phosphate: step 2/3. In Clostridium botulinum (strain Langeland / NCTC 10281 / Type F), this protein is Argininosuccinate synthase.